The sequence spans 590 residues: Glutamine--fructose-6-phosphate aminotransferase [isomerizing] (590 aa).

Cysteine 2 functions as the Nucleophile; for GATase activity in the catalytic mechanism. Residues cysteine 2–aspartate 219 form the Glutamine amidotransferase type-2 domain. SIS domains lie at valine 277–methionine 415 and leucine 438–proline 580. The active-site For Fru-6P isomerization activity is the lysine 585.

Homodimer.

It is found in the cytoplasm. It carries out the reaction D-fructose 6-phosphate + L-glutamine = D-glucosamine 6-phosphate + L-glutamate. Catalyzes the first step in hexosamine metabolism, converting fructose-6P into glucosamine-6P using glutamine as a nitrogen source. In Methanothermobacter thermautotrophicus (strain ATCC 29096 / DSM 1053 / JCM 10044 / NBRC 100330 / Delta H) (Methanobacterium thermoautotrophicum), this protein is Glutamine--fructose-6-phosphate aminotransferase [isomerizing].